The chain runs to 500 residues: Histidine--tRNA ligase (500 aa).

This sequence belongs to the class-II aminoacyl-tRNA synthetase family. As to quaternary structure, homodimer.

Its subcellular location is the cytoplasm. The catalysed reaction is tRNA(His) + L-histidine + ATP = L-histidyl-tRNA(His) + AMP + diphosphate + H(+). This chain is Histidine--tRNA ligase, found in Ruegeria sp. (strain TM1040) (Silicibacter sp.).